We begin with the raw amino-acid sequence, 319 residues long: MSDNTLVSDYGMCEEEQVARIAWFYYHDGLTQSEISERLGLTRLKVSRLLEKGHQSGIIRVQINSRFEGCLEYENALRNHFALQNIRVLPALPDADIGLRLGIGAAHMLMESLRPQQLLAVGFGEATMTTLKRLSGFISAQQIRLVTLSGGVGPYMTGIGQLDAACSVSIMPAPLRASSQEIACTLRNENSVRDVMLTAQAADAAIVGIGAINQKDQASILKSGYITQGEQLMIGRKGAVGDILGYFFDAHGEIIPDIKIHNELIGLKLNSLSTIPTVIGVAGGEQKAEAIIAAMRGNYINALVTDQKTAGKIIQLIEK.

A DNA-binding region (H-T-H motif) is located at residues 32–55 (QSEISERLGLTRLKVSRLLEKGHQ).

It belongs to the SorC transcriptional regulatory family.

The protein resides in the cytoplasm. With respect to regulation, inactivated by phosphorylated autoinducer-2 (phospho-AI-2). Phospho-AI-2 acts by binding to LsrR, which is then unable to bind to the promoter regions, allowing the transcription of the target genes. Its function is as follows. Transcriptional regulator that represses the expression of the lsr operon in the absence of the quorum-sensing signaling molecule autoinducer 2 (AI-2). It also represses the expression of the lsrRK operon. Acts by binding to the intergenic region between the lsr operon and lsrR. In the presence of phosphorylated autoinducer-2 (phospho-AI-2), LsrR is inactivated, leading to the transcription of the genes. In Salmonella paratyphi A (strain ATCC 9150 / SARB42), this protein is Transcriptional regulator LsrR (lsrR).